Here is an 80-residue protein sequence, read N- to C-terminus: Conotoxin PnMKLT1-0121 (80 aa).

The first 22 residues, Met1–Ala22, serve as a signal peptide directing secretion. A propeptide spanning residues Asp23–Asn49 is cleaved from the precursor. 3 cysteine pairs are disulfide-bonded: Cys52-Cys67, Cys59-Cys71, and Cys66-Cys75.

Belongs to the conotoxin O1 superfamily. As to expression, expressed by the venom duct.

It localises to the secreted. The sequence is that of Conotoxin PnMKLT1-0121 from Conus pennaceus (Feathered cone).